The primary structure comprises 97 residues: uncharacterized protein (97 aa).

Positions 72–97 (TVERKRSEHTNSRKKDPSAYTWSDVK) are disordered. Residues 73-88 (VERKRSEHTNSRKKDP) show a composition bias toward basic and acidic residues.

Belongs to the chlamydial CPn_0121/CT_031/TC_0300 family.

This is an uncharacterized protein from Chlamydia pneumoniae (Chlamydophila pneumoniae).